The following is a 204-amino-acid chain: Small ribosomal subunit protein uS4 (204 aa).

Residues 25–45 (AVPSRRAYPPGQHGQARKKRS) are disordered. In terms of domain architecture, S4 RNA-binding spans 92–152 (MRLDNIIFRL…NKENSRRLAE (61 aa)).

The protein belongs to the universal ribosomal protein uS4 family. In terms of assembly, part of the 30S ribosomal subunit. Contacts protein S5. The interaction surface between S4 and S5 is involved in control of translational fidelity.

Functionally, one of the primary rRNA binding proteins, it binds directly to 16S rRNA where it nucleates assembly of the body of the 30S subunit. Its function is as follows. With S5 and S12 plays an important role in translational accuracy. This chain is Small ribosomal subunit protein uS4, found in Cyanothece sp. (strain PCC 7425 / ATCC 29141).